The sequence spans 297 residues: Bax inhibitor 1 (297 aa).

The Lumenal segment spans residues 1-53 (MSGPPPPYEEQSSHLYGQPASSQDGNAFIPEDFKYSTVVISCEPIIRQRFMHK). A helical transmembrane segment spans residues 54-74 (VYSLLSCQLLASLSFCYWASV). The Cytoplasmic segment spans residues 75-85 (STSLQNFIMSH). The chain crosses the membrane as a helical span at residues 86–106 (IALFYICMVVSLVSCIWLAVS). Residues 107–146 (PRPEDYEASVPEPLLTGSSEEPAQEQRRLPWYVLSSYKQK) lie on the Lumenal side of the membrane. The helical transmembrane segment at 147 to 167 (LTLLSIFTLSEAYCLSLVTLA) threads the bilayer. Residues 168–171 (YDKD) are Cytoplasmic-facing. A helical membrane pass occupies residues 172-192 (TVLSALLITTIVVVGVSLTAL). Over 193–208 (SERFENVLNSATSIYY) the chain is Lumenal. Residues 209–229 (WLNWGLWIMIGMGLTALLFGW) form a helical membrane-spanning segment. Topologically, residues 230-239 (NTHSSKFNLL) are cytoplasmic. A helical transmembrane segment spans residues 240 to 260 (YGWLGAILFTAYLFIDTQLIF). At 261–270 (RKVYPDEEVR) the chain is on the lumenal side. A helical transmembrane segment spans residues 271–291 (CAMMLYLDIVNLFLSILRILA). Residues 292-297 (NSNDDN) lie on the Cytoplasmic side of the membrane.

This sequence belongs to the BI1 family. LFG subfamily.

It is found in the endoplasmic reticulum membrane. It localises to the vacuole membrane. The protein resides in the mitochondrion membrane. Functionally, links the unfolded protein response and programmed cell death and mediates mitochondrial-dependent apoptosis. Induces cell death and disruption of the mitochondrial transmembrane potential via the mitochondrial phosphate carrier MIR1. Dispensible for starvation-induced autophagy. This Saccharomyces cerevisiae (strain ATCC 204508 / S288c) (Baker's yeast) protein is Bax inhibitor 1 (BXI1).